We begin with the raw amino-acid sequence, 358 residues long: Phospho-N-acetylmuramoyl-pentapeptide-transferase (358 aa).

10 helical membrane passes run 26–46 (TIYA…WIIR), 71–91 (TPTM…LLWA), 93–113 (LTNV…LIGF), 134–154 (MFWQ…TPGF), 170–190 (LGIF…NAVN), 197–217 (GLAI…AYVA), 234–254 (AGEL…FLWF), 261–281 (VFMG…IAVL), 286–306 (ILLV…IFQV), and 335–355 (KIIV…ISTL).

This sequence belongs to the glycosyltransferase 4 family. MraY subfamily. Requires Mg(2+) as cofactor.

The protein resides in the cell inner membrane. It carries out the reaction UDP-N-acetyl-alpha-D-muramoyl-L-alanyl-gamma-D-glutamyl-meso-2,6-diaminopimeloyl-D-alanyl-D-alanine + di-trans,octa-cis-undecaprenyl phosphate = di-trans,octa-cis-undecaprenyl diphospho-N-acetyl-alpha-D-muramoyl-L-alanyl-D-glutamyl-meso-2,6-diaminopimeloyl-D-alanyl-D-alanine + UMP. Its pathway is cell wall biogenesis; peptidoglycan biosynthesis. In terms of biological role, catalyzes the initial step of the lipid cycle reactions in the biosynthesis of the cell wall peptidoglycan: transfers peptidoglycan precursor phospho-MurNAc-pentapeptide from UDP-MurNAc-pentapeptide onto the lipid carrier undecaprenyl phosphate, yielding undecaprenyl-pyrophosphoryl-MurNAc-pentapeptide, known as lipid I. This Trichlorobacter lovleyi (strain ATCC BAA-1151 / DSM 17278 / SZ) (Geobacter lovleyi) protein is Phospho-N-acetylmuramoyl-pentapeptide-transferase.